We begin with the raw amino-acid sequence, 329 residues long: MKKQDLMSIDEIQKLADPDMQKVNQNILAQLNSDVPLIGQLGFYIVQGGGKRIRPLIAVLAARSLGFEGSNSITCATFVEFIHTASLLHDDVVDESDMRRGRATANAEFGNAASVLVGDFIYTRAFQLVAQLESLKILSIMADATNVLAEGEVQQLMNVNDPETSEANYMRVIYSKTARLFEVAGQAAAIVAGGTEAQEKALQDYGRYLGTAFQLVDDVLDYSANTQALGKNVGDDLAEGKPTLPLLHAMRHGNAQQAALIREAIEQGGKREAIDEVLAIMTEHKSLDYAMNRAKEEAQKAVDAIEILPESEYKQALISLAYLSVDRNY.

Positions 51, 54, and 83 each coordinate isopentenyl diphosphate. Mg(2+) is bound by residues aspartate 90 and aspartate 94. An an all-trans-polyprenyl diphosphate-binding site is contributed by arginine 99. An isopentenyl diphosphate-binding site is contributed by arginine 100. Positions 176, 177, and 214 each coordinate an all-trans-polyprenyl diphosphate.

The protein belongs to the FPP/GGPP synthase family. It depends on Mg(2+) as a cofactor.

It carries out the reaction 5 isopentenyl diphosphate + (2E,6E)-farnesyl diphosphate = all-trans-octaprenyl diphosphate + 5 diphosphate. Supplies octaprenyl diphosphate, the precursor for the side chain of the isoprenoid quinones ubiquinone and menaquinone. This chain is Octaprenyl diphosphate synthase (ispB), found in Haemophilus influenzae (strain ATCC 51907 / DSM 11121 / KW20 / Rd).